The chain runs to 132 residues: Small ribosomal subunit protein uS8 (132 aa).

The protein belongs to the universal ribosomal protein uS8 family. Part of the 30S ribosomal subunit. Contacts proteins S5 and S12.

Functionally, one of the primary rRNA binding proteins, it binds directly to 16S rRNA central domain where it helps coordinate assembly of the platform of the 30S subunit. The chain is Small ribosomal subunit protein uS8 from Oceanobacillus iheyensis (strain DSM 14371 / CIP 107618 / JCM 11309 / KCTC 3954 / HTE831).